Here is a 627-residue protein sequence, read N- to C-terminus: Xaa-Pro aminopeptidase 1 (627 aa).

Positions 88 and 405 each coordinate a peptide. Residues Asp-424, Asp-435, and His-498 each coordinate Mn(2+). A peptide contacts are provided by His-498, His-507, and Glu-533. Mn(2+) is bound by residues Glu-533 and Glu-547.

This sequence belongs to the peptidase M24B family. In terms of assembly, homodimer. Mn(2+) is required as a cofactor.

The protein resides in the cytoplasm. It localises to the cytosol. It carries out the reaction Release of any N-terminal amino acid, including proline, that is linked to proline, even from a dipeptide or tripeptide.. Functionally, metalloaminopeptidase that catalyzes the removal of a penultimate prolyl residue from the N-termini of peptides, such as Arg-Pro-Pro. This chain is Xaa-Pro aminopeptidase 1 (xpnpep1), found in Dictyostelium discoideum (Social amoeba).